The chain runs to 117 residues: UPF0102 protein Rsph17029_0461 (117 aa).

It belongs to the UPF0102 family.

The sequence is that of UPF0102 protein Rsph17029_0461 from Cereibacter sphaeroides (strain ATCC 17029 / ATH 2.4.9) (Rhodobacter sphaeroides).